We begin with the raw amino-acid sequence, 114 residues long: Probable 4-amino-4-deoxy-L-arabinose-phosphoundecaprenol flippase subunit ArnE (114 aa).

3 helical membrane-spanning segments follow: residues 38 to 58 (LTLRWLAIAVVSLGLGMLLWL), 64 to 84 (LPLSVAYPMLSFNFVLVTLAA), and 94 to 114 (LRHWLGVAAIMFGILLMSWHL). An EamA domain is found at 43–112 (LAIAVVSLGL…IMFGILLMSW (70 aa)).

The protein belongs to the ArnE family. In terms of assembly, heterodimer of ArnE and ArnF.

The protein localises to the cell inner membrane. It participates in bacterial outer membrane biogenesis; lipopolysaccharide biosynthesis. Its function is as follows. Translocates 4-amino-4-deoxy-L-arabinose-phosphoundecaprenol (alpha-L-Ara4N-phosphoundecaprenol) from the cytoplasmic to the periplasmic side of the inner membrane. The chain is Probable 4-amino-4-deoxy-L-arabinose-phosphoundecaprenol flippase subunit ArnE from Yersinia pestis bv. Antiqua (strain Antiqua).